Reading from the N-terminus, the 373-residue chain is Methylmalonyl-CoA decarboxylase subunit beta (373 aa).

The next 10 membrane-spanning stretches (helical) occupy residues F17–L37, A38–A58, I81–A101, L106–L126, E132–T152, P156–I176, I206–L226, V257–L277, I280–F300, and F343–A363.

This sequence belongs to the GcdB/MmdB/OadB family. As to quaternary structure, the methylmalonyl-CoA decarboxylase is composed of five subunits: the carboxyltransferase alpha subunit (MmdA), the tunnel beta subunit (MmdB), the biotin-containing gamma subunit (MmdC), and the delta (MmdD) and epsilon (MmdE) subunits. In terms of processing, the N-terminus is blocked.

It localises to the cell membrane. It catalyses the reaction (S)-methylmalonyl-CoA + Na(+)(in) + H(+)(out) = propanoyl-CoA + Na(+)(out) + CO2. With respect to regulation, completely inhibited by avidin. Functionally, tunnel subunit of the sodium ion pump methylmalonyl-CoA decarboxylase, which converts the chemical energy of a decarboxylation reaction into an electrochemical gradient of Na(+) ions across the cytoplasmic membrane, thereby creating a sodium ion motive force that is used for ATP synthesis. The beta subunit catalyzes the decarboxylation of the carboxybiotin carrier protein and the coupled export of Na(+) ions. Can also convert malonyl-CoA into acetyl-CoA. This Veillonella parvula (Staphylococcus parvulus) protein is Methylmalonyl-CoA decarboxylase subunit beta.